Consider the following 264-residue polypeptide: Ribosomal RNA small subunit methyltransferase A (264 aa).

Residues Asn15, Ile17, Gly42, Glu64, Asp90, and Asn109 each contribute to the S-adenosyl-L-methionine site.

Belongs to the class I-like SAM-binding methyltransferase superfamily. rRNA adenine N(6)-methyltransferase family. RsmA subfamily.

It is found in the cytoplasm. The enzyme catalyses adenosine(1518)/adenosine(1519) in 16S rRNA + 4 S-adenosyl-L-methionine = N(6)-dimethyladenosine(1518)/N(6)-dimethyladenosine(1519) in 16S rRNA + 4 S-adenosyl-L-homocysteine + 4 H(+). Its function is as follows. Specifically dimethylates two adjacent adenosines (A1518 and A1519) in the loop of a conserved hairpin near the 3'-end of 16S rRNA in the 30S particle. May play a critical role in biogenesis of 30S subunits. The polypeptide is Ribosomal RNA small subunit methyltransferase A (Wolbachia pipientis subsp. Culex pipiens (strain wPip)).